Consider the following 162-residue polypeptide: Small ribosomal subunit protein uS7m (162 aa).

This sequence belongs to the universal ribosomal protein uS7 family. As to quaternary structure, part of the small ribosomal subunit.

It localises to the mitochondrion. Its function is as follows. One of the primary rRNA binding proteins, it binds directly to 16S-like rRNA where it nucleates assembly of the head domain of the small subunit. The protein is Small ribosomal subunit protein uS7m (mrps7) of Dictyostelium discoideum (Social amoeba).